The primary structure comprises 472 residues: MSGTVMQIVRVAILADSRLTEMALPAELPLREILPAVQRLVVPSAQNGDGGQADSGAAVQLSLAPVGGQPFSLDASLDTVGVVDGDLLVLQPVPAGPAAPGIVEDIADAAMIFSTSRLKPWGIAHIQRGALAAVIAVALLATGLTVTYRVATGVLAGLLAVAGIAVASALAGLLITIRSPRSGIALSIAALVPIGAALALAVPGKFGPAQVLLGAAGVAAWSLIALMIPSAERERVVAFFTAAAVVGASVALAAGAQLLWQLPLLSIGCGLIVAALLVTIQAAQLSALWARFPLPVIPAPGDPTPSAPPLRLLEDLPRRVRVSDAHQSGFIAAAVLLSVLGSVAIAVRPEALSVVGWYLVAATAAAATLRARVWDSAACKAWLLAQPYLVAGVLLVFYTATGRYVAAFGAVLVLAVLMLAWVVVALNPGIASPESYSLPLRRLLGLVAAGLDVSLIPVMAYLVGLFAWVLNR.

Transmembrane regions (helical) follow at residues 121 to 141 (WGIA…ALLA), 155 to 175 (LAGL…GLLI), 183 to 203 (GIAL…LAVP), 211 to 231 (VLLG…IPSA), 236 to 256 (VVAF…AAGA), 258 to 278 (LLWQ…ALLV), 327 to 347 (QSGF…AIAV), 349 to 369 (PEAL…AATL), 381 to 401 (AWLL…YTAT), 405 to 425 (VAAF…VVVA), and 450 to 470 (GLDV…AWVL).

It belongs to the EccD/Snm4 family. As to quaternary structure, part of the ESX-3 / type VII secretion system (T7SS), which is composed of cytosolic and membrane components. The ESX-3 membrane complex is composed of EccB3, EccC3, EccD3 and EccE3.

It localises to the cell inner membrane. Functionally, part of the ESX-3 specialized secretion system, which is important for iron and zinc uptake or homeostasis. The sequence is that of ESX-3 secretion system protein EccD3 from Mycobacterium tuberculosis (strain CDC 1551 / Oshkosh).